The following is a 460-amino-acid chain: Lipase member H-B (460 aa).

Residues 1 to 26 (MLLSFYFNGLLLVGCLLSWGRSDTEG) form the signal peptide. Residues asparagine 67 and asparagine 75 are each glycosylated (N-linked (GlcNAc...) asparagine). Serine 163 (nucleophile) is an active-site residue. A glycan (N-linked (GlcNAc...) asparagine) is linked at asparagine 177. Aspartate 187 (charge relay system) is an active-site residue. A disulfide bridge links cysteine 242 with cysteine 255. Residue histidine 257 is the Charge relay system of the active site. Intrachain disulfides connect cysteine 279-cysteine 290 and cysteine 293-cysteine 301. Residue asparagine 289 is glycosylated (N-linked (GlcNAc...) asparagine). A glycan (N-linked (GlcNAc...) asparagine) is linked at asparagine 366. A disulfide bridge connects residues cysteine 436 and cysteine 455.

This sequence belongs to the AB hydrolase superfamily. Lipase family.

It localises to the secreted. It is found in the cell membrane. The catalysed reaction is 1-hexadecanoyl-2-(9Z-octadecenoyl)-sn-glycero-3-phosphate + H2O = 2-(9Z-octadecenoyl)-sn-glycero-3-phosphate + hexadecanoate + H(+). In terms of biological role, hydrolyzes specifically phosphatidic acid (PA) to produce 2-acyl lysophosphatidic acid (LPA; a potent bioactive lipid mediator) and fatty acid. Does not hydrolyze other phospholipids, like phosphatidylserine (PS), phosphatidylcholine (PC) and phosphatidylethanolamine (PE) or triacylglycerol (TG). The sequence is that of Lipase member H-B (liph-b) from Xenopus laevis (African clawed frog).